The following is a 476-amino-acid chain: Glutamyl-tRNA(Gln) amidotransferase subunit A (476 aa).

Residues Lys69 and Ser144 each act as charge relay system in the active site. Ser168 acts as the Acyl-ester intermediate in catalysis.

This sequence belongs to the amidase family. GatA subfamily. In terms of assembly, heterotrimer of A, B and C subunits.

The enzyme catalyses L-glutamyl-tRNA(Gln) + L-glutamine + ATP + H2O = L-glutaminyl-tRNA(Gln) + L-glutamate + ADP + phosphate + H(+). Functionally, allows the formation of correctly charged Gln-tRNA(Gln) through the transamidation of misacylated Glu-tRNA(Gln) in organisms which lack glutaminyl-tRNA synthetase. The reaction takes place in the presence of glutamine and ATP through an activated gamma-phospho-Glu-tRNA(Gln). In Sulfolobus acidocaldarius (strain ATCC 33909 / DSM 639 / JCM 8929 / NBRC 15157 / NCIMB 11770), this protein is Glutamyl-tRNA(Gln) amidotransferase subunit A.